A 571-amino-acid chain; its full sequence is Proline--tRNA ligase (571 aa).

It belongs to the class-II aminoacyl-tRNA synthetase family. ProS type 1 subfamily. In terms of assembly, homodimer.

The protein localises to the cytoplasm. It carries out the reaction tRNA(Pro) + L-proline + ATP = L-prolyl-tRNA(Pro) + AMP + diphosphate. Its function is as follows. Catalyzes the attachment of proline to tRNA(Pro) in a two-step reaction: proline is first activated by ATP to form Pro-AMP and then transferred to the acceptor end of tRNA(Pro). As ProRS can inadvertently accommodate and process non-cognate amino acids such as alanine and cysteine, to avoid such errors it has two additional distinct editing activities against alanine. One activity is designated as 'pretransfer' editing and involves the tRNA(Pro)-independent hydrolysis of activated Ala-AMP. The other activity is designated 'posttransfer' editing and involves deacylation of mischarged Ala-tRNA(Pro). The misacylated Cys-tRNA(Pro) is not edited by ProRS. The polypeptide is Proline--tRNA ligase (Pseudoalteromonas atlantica (strain T6c / ATCC BAA-1087)).